The sequence spans 233 residues: MTELTVNQPLNYRNTGFITSAPDIRHLPQDTGVEIAFAGRSNAGKSSALNRITDQKGLARTSKTPGRTQLINMFEVTQGCNLIDLPGYGFAQVPLELKIKWQKALGEYLQKRECLKGLVVLMDIRHPMKDLDQQMIFWAIESRLPVLVLLTKADKMKSGARKAQLLKVRESSKSFGGDVQIELFSSLKGIGLDQVRRKLDTWFGPELERQLMLAAAENGETYTGESLSDKSDD.

The EngB-type G domain maps to 31–205 (TGVEIAFAGR…RRKLDTWFGP (175 aa)). Residues 39–46 (GRSNAGKS), 66–70 (GRTQL), 84–87 (DLPG), 151–154 (TKAD), and 184–186 (FSS) contribute to the GTP site. Residues S46 and T68 each contribute to the Mg(2+) site.

It belongs to the TRAFAC class TrmE-Era-EngA-EngB-Septin-like GTPase superfamily. EngB GTPase family. Requires Mg(2+) as cofactor.

Functionally, necessary for normal cell division and for the maintenance of normal septation. This chain is Probable GTP-binding protein EngB, found in Photobacterium profundum (strain SS9).